Here is a 598-residue protein sequence, read N- to C-terminus: DNA (cytosine-5)-methyltransferase DRM2 (598 aa).

Disordered regions lie at residues 1 to 49 (MVDW…NGKA) and 114 to 146 (EVDE…GDED). Positions 42–91 (PQDANGKANGSGALVAEFMGMGFPKEMILKAIKEIGDTDTEQLLELLLTY) constitute a UBA 1 domain. The segment covering 114-128 (EVDEEEDDTNWDEYD) has biased composition (acidic residues). Residues 150–194 (EMSEKDEKMKSLVNMGFPEDEAKMAIDRCGLDAPVAVLVDSIYAS) form the UBA 2 domain. Positions 227–252 (GSKKRKRYGSGPSGNQVPFDGSHEEP) are disordered. The SAM-dependent MTase DRM-type domain maps to 272-598 (VHRNLPDQAL…EHVKATMSAV (327 aa)).

The protein belongs to the class I-like SAM-binding methyltransferase superfamily. DRM-methyltransferase family. As to quaternary structure, interacts (via UBA domains) with EIF4A.

The protein localises to the nucleus. It carries out the reaction a 2'-deoxycytidine in DNA + S-adenosyl-L-methionine = a 5-methyl-2'-deoxycytidine in DNA + S-adenosyl-L-homocysteine + H(+). Its function is as follows. Involved in de novo DNA methylation. Required for CpG and non-CpG methylation. Required for normal establishment and maintenance of RNA-directed DNA methylation (RdDM) mediated by small interfering RNAs (siRNAs). Regulates proper plant development in both vegetative and reproductive stages through DNA methylation. The chain is DNA (cytosine-5)-methyltransferase DRM2 from Oryza sativa subsp. japonica (Rice).